The sequence spans 236 residues: Large ribosomal subunit protein uL2 (236 aa).

Residues 1–10 (MGHRITTQSR) are compositionally biased toward polar residues. Disordered regions lie at residues 1 to 20 (MGHR…YRAP) and 202 to 236 (GGGG…TGRR). Residues 224–236 (KVGHIAARRTGRR) are compositionally biased toward basic residues.

Belongs to the universal ribosomal protein uL2 family. As to quaternary structure, part of the 50S ribosomal subunit. Forms a bridge to the 30S subunit in the 70S ribosome.

One of the primary rRNA binding proteins. Required for association of the 30S and 50S subunits to form the 70S ribosome, for tRNA binding and peptide bond formation. It has been suggested to have peptidyltransferase activity; this is somewhat controversial. Makes several contacts with the 16S rRNA in the 70S ribosome. The polypeptide is Large ribosomal subunit protein uL2 (Methanospirillum hungatei JF-1 (strain ATCC 27890 / DSM 864 / NBRC 100397 / JF-1)).